Here is a 522-residue protein sequence, read N- to C-terminus: ATP synthase subunit alpha (522 aa).

176 to 183 (GDRQTGKT) is a binding site for ATP.

This sequence belongs to the ATPase alpha/beta chains family. In terms of assembly, F-type ATPases have 2 components, CF(1) - the catalytic core - and CF(0) - the membrane proton channel. CF(1) has five subunits: alpha(3), beta(3), gamma(1), delta(1), epsilon(1). CF(0) has four main subunits: a, b, b' and c.

Its subcellular location is the cell membrane. It catalyses the reaction ATP + H2O + 4 H(+)(in) = ADP + phosphate + 5 H(+)(out). Its function is as follows. Produces ATP from ADP in the presence of a proton gradient across the membrane. The alpha chain is a regulatory subunit. This Chloroflexus aggregans (strain MD-66 / DSM 9485) protein is ATP synthase subunit alpha.